The sequence spans 715 residues: Polyribonucleotide nucleotidyltransferase (715 aa).

D488 and D494 together coordinate Mg(2+). Residues 555–614 form the KH domain; the sequence is PRIEVMHIPTDKIRDVIGTGGKVIREIVEKTGAKINIEDDGTVKIASSNGKEIEAARKWI. Residues 624-692 enclose the S1 motif domain; the sequence is GEIYEGTVVK…ERGKVRLSMK (69 aa).

Belongs to the polyribonucleotide nucleotidyltransferase family. Mg(2+) is required as a cofactor.

It is found in the cytoplasm. It carries out the reaction RNA(n+1) + phosphate = RNA(n) + a ribonucleoside 5'-diphosphate. Involved in mRNA degradation. Catalyzes the phosphorolysis of single-stranded polyribonucleotides processively in the 3'- to 5'-direction. In Chelativorans sp. (strain BNC1), this protein is Polyribonucleotide nucleotidyltransferase.